Consider the following 589-residue polypeptide: Proline--tRNA ligase (589 aa).

This sequence belongs to the class-II aminoacyl-tRNA synthetase family. ProS type 1 subfamily. Homodimer.

The protein localises to the cytoplasm. The enzyme catalyses tRNA(Pro) + L-proline + ATP = L-prolyl-tRNA(Pro) + AMP + diphosphate. In terms of biological role, catalyzes the attachment of proline to tRNA(Pro) in a two-step reaction: proline is first activated by ATP to form Pro-AMP and then transferred to the acceptor end of tRNA(Pro). As ProRS can inadvertently accommodate and process non-cognate amino acids such as alanine and cysteine, to avoid such errors it has two additional distinct editing activities against alanine. One activity is designated as 'pretransfer' editing and involves the tRNA(Pro)-independent hydrolysis of activated Ala-AMP. The other activity is designated 'posttransfer' editing and involves deacylation of mischarged Ala-tRNA(Pro). The misacylated Cys-tRNA(Pro) is not edited by ProRS. This is Proline--tRNA ligase from Nocardioides sp. (strain ATCC BAA-499 / JS614).